The sequence spans 255 residues: Acetyl-coenzyme A carboxylase carboxyl transferase subunit alpha (255 aa).

A CoA carboxyltransferase C-terminal domain is found at 1-235; the sequence is MNIAKIVREA…KKELQTELAR (235 aa).

It belongs to the AccA family. As to quaternary structure, acetyl-CoA carboxylase is a heterohexamer composed of biotin carboxyl carrier protein (AccB), biotin carboxylase (AccC) and two subunits each of ACCase subunit alpha (AccA) and ACCase subunit beta (AccD).

The protein localises to the cytoplasm. It catalyses the reaction N(6)-carboxybiotinyl-L-lysyl-[protein] + acetyl-CoA = N(6)-biotinyl-L-lysyl-[protein] + malonyl-CoA. The protein operates within lipid metabolism; malonyl-CoA biosynthesis; malonyl-CoA from acetyl-CoA: step 1/1. Its function is as follows. Component of the acetyl coenzyme A carboxylase (ACC) complex. First, biotin carboxylase catalyzes the carboxylation of biotin on its carrier protein (BCCP) and then the CO(2) group is transferred by the carboxyltransferase to acetyl-CoA to form malonyl-CoA. In Streptococcus pneumoniae serotype 2 (strain D39 / NCTC 7466), this protein is Acetyl-coenzyme A carboxylase carboxyl transferase subunit alpha.